A 183-amino-acid chain; its full sequence is Dual-action ribosomal maturation protein DarP (183 aa).

Belongs to the DarP family.

It is found in the cytoplasm. Member of a network of 50S ribosomal subunit biogenesis factors which assembles along the 30S-50S interface, preventing incorrect 23S rRNA structures from forming. Promotes peptidyl transferase center (PTC) maturation. The polypeptide is Dual-action ribosomal maturation protein DarP (Shigella flexneri serotype 5b (strain 8401)).